A 62-amino-acid chain; its full sequence is MESVAKPATTKEGSAKQAAIVVGVLALGWFAIQVAFIPLFNKVRGGGSDKKDDDVNAFTPDT.

The Chloroplast intermembrane segment spans residues 1–17 (MESVAKPATTKEGSAKQ). The chain crosses the membrane as a helical span at residues 18–40 (AAIVVGVLALGWFAIQVAFIPLF). Residues 41 to 62 (NKVRGGGSDKKDDDVNAFTPDT) lie on the Cytoplasmic side of the membrane.

It is found in the plastid. Its subcellular location is the chloroplast outer membrane. This Spinacia oleracea (Spinach) protein is 6.7 kDa chloroplast outer envelope membrane protein.